The following is a 394-amino-acid chain: Putative serine protease HhoA (394 aa).

The signal sequence occupies residues 1–24 (MKYPTWLRRIGGYLLAFAVGTAFG). In terms of domain architecture, PDZ spans 293 to 377 (MMNITVDQAQ…ALKLDLLRGD (85 aa)).

This sequence belongs to the peptidase S1C family.

It localises to the periplasm. Its function is as follows. A putative protease, its function overlaps that of the related putative proteases HhoB and HtrA. The polypeptide is Putative serine protease HhoA (hhoA) (Synechocystis sp. (strain ATCC 27184 / PCC 6803 / Kazusa)).